A 61-amino-acid chain; its full sequence is Small ribosomal subunit protein uS14 (61 aa).

Residues C24, C27, C40, and C43 each contribute to the Zn(2+) site.

The protein belongs to the universal ribosomal protein uS14 family. Zinc-binding uS14 subfamily. In terms of assembly, part of the 30S ribosomal subunit. Contacts proteins S3 and S10. Zn(2+) is required as a cofactor.

Functionally, binds 16S rRNA, required for the assembly of 30S particles and may also be responsible for determining the conformation of the 16S rRNA at the A site. The polypeptide is Small ribosomal subunit protein uS14 (Alkaliphilus oremlandii (strain OhILAs) (Clostridium oremlandii (strain OhILAs))).